A 1018-amino-acid chain; its full sequence is Isoleucine--tRNA ligase (1018 aa).

Residues 43–53 carry the 'HIGH' region motif; sequence PYTTGRIHLGT. Residues 586–590 carry the 'KMSKS' region motif; the sequence is KMSKS. Lysine 589 is a binding site for ATP.

It belongs to the class-I aminoacyl-tRNA synthetase family. IleS type 2 subfamily. In terms of assembly, monomer. It depends on Zn(2+) as a cofactor.

The protein localises to the cytoplasm. It carries out the reaction tRNA(Ile) + L-isoleucine + ATP = L-isoleucyl-tRNA(Ile) + AMP + diphosphate. Catalyzes the attachment of isoleucine to tRNA(Ile). As IleRS can inadvertently accommodate and process structurally similar amino acids such as valine, to avoid such errors it has two additional distinct tRNA(Ile)-dependent editing activities. One activity is designated as 'pretransfer' editing and involves the hydrolysis of activated Val-AMP. The other activity is designated 'posttransfer' editing and involves deacylation of mischarged Val-tRNA(Ile). This Archaeoglobus fulgidus (strain ATCC 49558 / DSM 4304 / JCM 9628 / NBRC 100126 / VC-16) protein is Isoleucine--tRNA ligase.